Here is a 99-residue protein sequence, read N- to C-terminus: Ferredoxin, heterocyst (99 aa).

Positions 4–96 (YQVRLINKKE…NCTIKTHQEP (93 aa)) constitute a 2Fe-2S ferredoxin-type domain. Positions 42, 47, 50, and 80 each coordinate [2Fe-2S] cluster.

This sequence belongs to the 2Fe2S plant-type ferredoxin family. [2Fe-2S] cluster is required as a cofactor.

Its function is as follows. Ferredoxins are iron-sulfur proteins that transfer electrons in a wide variety of metabolic reactions. The protein is Ferredoxin, heterocyst (fdxH) of Microchaete diplosiphon (Fremyella diplosiphon).